A 422-amino-acid chain; its full sequence is Serine protease HTRA2, mitochondrial (422 aa).

A mitochondrion-targeting transit peptide spans 1 to 17 (MALRGSHRLEVIFKRCI). Residues 18-74 (ASPVLHSQAGNRRSSQLAIKGVDPNSNGNSGQYQQNGEHKEKGWRRLVRFFVPFSLG) constitute a propeptide that is removed on maturation. The disordered stretch occupies residues 28–55 (NRRSSQLAIKGVDPNSNGNSGQYQQNGE). Residues 42 to 53 (NSNGNSGQYQQN) show a composition bias toward low complexity. A helical membrane pass occupies residues 64-82 (LVRFFVPFSLGAAVSAAII). Short sequence motifs (IAP-binding) lie at residues 75-78 (AAVS) and 94-97 (SKMT). Residues 139-302 (SNGSGFIIEQ…IPIDYVKVFL (164 aa)) form a serine protease region. Residues H157, D189, and S266 each act as charge relay system in the active site. One can recognise a PDZ domain in the interval 325-410 (MGITMLTLTP…TLDIVILRGV (86 aa)).

Belongs to the peptidase S1C family. In terms of assembly, interacts with th/DIAP1 (via BIR 2 domain).

It localises to the mitochondrion intermembrane space. The protein localises to the mitochondrion membrane. It carries out the reaction Cleavage of non-polar aliphatic amino-acids at the P1 position, with a preference for Val, Ile and Met. At the P2 and P3 positions, Arg is selected most strongly with a secondary preference for other hydrophilic residues.. Its function is as follows. Serine protease that shows proteolytic activity against a non-specific substrate beta-casein. Promotes or induces cell death either by direct binding to and inhibition of BIRC proteins (also called inhibitor of apoptosis proteins, IAPs), leading to an increase in caspase activity, or by a BIRC inhibition-independent, caspase-independent and serine protease activity-dependent mechanism. Can antagonize antiapoptotic activity of th/Diap1 by directly inducing the degradation of th/Diap1. The chain is Serine protease HTRA2, mitochondrial from Drosophila sechellia (Fruit fly).